Reading from the N-terminus, the 302-residue chain is Protoheme IX farnesyltransferase (302 aa).

The next 9 helical transmembrane spans lie at V27–H47, P48–L68, S97–L117, V119–W139, I148–G168, L176–I196, I219–G239, L240–A260, and L280–V300.

Belongs to the UbiA prenyltransferase family. Protoheme IX farnesyltransferase subfamily.

The protein resides in the cell inner membrane. The catalysed reaction is heme b + (2E,6E)-farnesyl diphosphate + H2O = Fe(II)-heme o + diphosphate. Its pathway is porphyrin-containing compound metabolism; heme O biosynthesis; heme O from protoheme: step 1/1. Functionally, converts heme B (protoheme IX) to heme O by substitution of the vinyl group on carbon 2 of heme B porphyrin ring with a hydroxyethyl farnesyl side group. This Rhizorhabdus wittichii (strain DSM 6014 / CCUG 31198 / JCM 15750 / NBRC 105917 / EY 4224 / RW1) (Sphingomonas wittichii) protein is Protoheme IX farnesyltransferase.